The following is a 343-amino-acid chain: S-adenosylmethionine:tRNA ribosyltransferase-isomerase (343 aa).

It belongs to the QueA family. In terms of assembly, monomer.

Its subcellular location is the cytoplasm. The enzyme catalyses 7-aminomethyl-7-carbaguanosine(34) in tRNA + S-adenosyl-L-methionine = epoxyqueuosine(34) in tRNA + adenine + L-methionine + 2 H(+). It participates in tRNA modification; tRNA-queuosine biosynthesis. Its function is as follows. Transfers and isomerizes the ribose moiety from AdoMet to the 7-aminomethyl group of 7-deazaguanine (preQ1-tRNA) to give epoxyqueuosine (oQ-tRNA). The polypeptide is S-adenosylmethionine:tRNA ribosyltransferase-isomerase (Geobacter metallireducens (strain ATCC 53774 / DSM 7210 / GS-15)).